Here is a 606-residue protein sequence, read N- to C-terminus: NADH-ubiquinone oxidoreductase chain 5 (606 aa).

The next 15 helical transmembrane spans lie at 3–23 (VINL…LPII), 38–58 (ITKT…LLFI), 87–107 (FFSL…MEFS), 124–144 (LLLF…LQLF), 180–200 (IGDM…NSWE), 216–236 (LLGL…HPWL), 244–264 (TPVS…FTLI), 276–296 (IQTS…ICAL), 304–323 (IIAL…IGIN), 328–350 (AFIH…GSII), 369–389 (MPIT…MPFL), 404–424 (MSYI…MTAS), 460–480 (LILG…PHTT), 483–503 (MTMP…GFTV), and 586–606 (LMKL…LIAL).

Belongs to the complex I subunit 5 family. In terms of assembly, core subunit of respiratory chain NADH dehydrogenase (Complex I) which is composed of 45 different subunits.

The protein localises to the mitochondrion inner membrane. It carries out the reaction a ubiquinone + NADH + 5 H(+)(in) = a ubiquinol + NAD(+) + 4 H(+)(out). In terms of biological role, core subunit of the mitochondrial membrane respiratory chain NADH dehydrogenase (Complex I) which catalyzes electron transfer from NADH through the respiratory chain, using ubiquinone as an electron acceptor. Essential for the catalytic activity and assembly of complex I. In Loxodonta africana (African elephant), this protein is NADH-ubiquinone oxidoreductase chain 5 (MT-ND5).